The primary structure comprises 93 residues: C-C motif chemokine 14 (93 aa).

Residues Met-1–Gly-19 form the signal peptide. Residue Ser-26 is glycosylated (O-linked (GalNAc...) serine; partial). Disulfide bonds link Cys-35–Cys-59 and Cys-36–Cys-75.

This sequence belongs to the intercrine beta (chemokine CC) family. In terms of processing, the N-terminal processed forms HCC-1(3-74), HCC-1(4-74) and HCC-1(9-74) are produced in small amounts by proteolytic cleavage after secretion in blood. Post-translationally, HCC-1(1-74), but not HCC-1(3-74) and HCC-1(4-74), is partially O-glycosylated; the O-linked glycan consists of one Gal-GalNAc disaccharide, further modified by two N-acetylneuraminic acids. In terms of tissue distribution, expressed constitutively in several normal tissues: spleen, liver, skeletal and heart muscle, gut, and bone marrow, present at high concentrations (1-80 nM) in plasma.

The protein resides in the secreted. Has weak activities on human monocytes and acts via receptors that also recognize MIP-1 alpha. It induces intracellular Ca(2+) changes and enzyme release, but no chemotaxis, at concentrations of 100-1,000 nM, and is inactive on T-lymphocytes, neutrophils, and eosinophil leukocytes. Enhances the proliferation of CD34 myeloid progenitor cells. The processed form HCC-1(9-74) is a chemotactic factor that attracts monocytes, eosinophils, and T-cells and is a ligand for CCR1, CCR3 and CCR5. This chain is C-C motif chemokine 14 (CCL14), found in Homo sapiens (Human).